Reading from the N-terminus, the 436-residue chain is [Pyruvate dehydrogenase (acetyl-transferring)] kinase isozyme 1, mitochondrial (436 aa).

The N-terminal 28 residues, 1–28 (MRLARLLRGAALAGPGPGLRAAGFSRSF), are a transit peptide targeting the mitochondrion. At tyrosine 136 the chain carries Phosphotyrosine; by FGFR1. A Histidine kinase domain is found at 163–393 (YKESFGVDPV…DAVIYIKALS (231 aa)). Residue tyrosine 243 is modified to Phosphotyrosine; by FGFR1, ABL1, FLT3 and JAK2. At tyrosine 244 the chain carries Phosphotyrosine; by FGFR1. ATP contacts are provided by residues 279 to 286 (ELFKNAMR), aspartate 318, 337 to 338 (ST), and 354 to 359 (GFGYGL). Threonine 338 bears the Phosphothreonine mark. An N6-succinyllysine modification is found at lysine 405.

Belongs to the PDK/BCKDK protein kinase family. In terms of assembly, homodimer, and heterodimer with PDK2. Interacts with the pyruvate dehydrogenase complex subunit DLAT, and is part of the multimeric pyruvate dehydrogenase complex that contains multiple copies of pyruvate dehydrogenase (E1), dihydrolipoamide acetyltransferase (DLAT, E2) and lipoamide dehydrogenase (DLD, E3). Interacts with phosphoglycerate kinase PGK1; the interaction is direct, occurs under hypoxic conditions and leads to PDK1-mediated inhibition of pyruvate dehydrogenase complex activity. In terms of processing, phosphorylated by constitutively activated ABL1, FGFR1, FLT3 and JAK2 (in vitro), and this may also occur in cancer cells that express constitutively activated ABL1, FGFR1, FLT3 and JAK2. Phosphorylation at Tyr-243 and Tyr-244 strongly increases kinase activity, while phosphorylation at Tyr-136 has a lesser effect. Phosphorylated under hypoxic conditions at Thr-338 by phosphoglycerate kinase PGK1 which has an activating effect. As to expression, expressed predominantly in the heart. Detected at lower levels in liver, skeletal muscle and pancreas.

It localises to the mitochondrion matrix. The enzyme catalyses L-seryl-[pyruvate dehydrogenase E1 alpha subunit] + ATP = O-phospho-L-seryl-[pyruvate dehydrogenase E1 alpha subunit] + ADP + H(+). Its activity is regulated as follows. Activity is enhanced by binding to the pyruvate dehydrogenase subunit DLAT. Inhibited by AZD7545; this compound interferes with DLAT binding and thereby inhibits kinase activity. Inhibited by dichloroacetate and radicicol. Activated under hypoxic conditions by phosphoglycerate kinase PGK1-mediated phosphorylation at Thr-338. Its function is as follows. Kinase that plays a key role in regulation of glucose and fatty acid metabolism and homeostasis via phosphorylation of the pyruvate dehydrogenase subunits PDHA1 and PDHA2. This inhibits pyruvate dehydrogenase activity, and thereby regulates metabolite flux through the tricarboxylic acid cycle, down-regulates aerobic respiration and inhibits the formation of acetyl-coenzyme A from pyruvate. Plays an important role in cellular responses to hypoxia and is important for cell proliferation under hypoxia. The sequence is that of [Pyruvate dehydrogenase (acetyl-transferring)] kinase isozyme 1, mitochondrial (PDK1) from Homo sapiens (Human).